Consider the following 450-residue polypeptide: MEASGTDDVEKLKSKFLSAWHNMKYSWVLKTKTYFKRNSPVFLLGKCYHFKYEDSGVTADDCSNSGSDSKEDLSGNVDEFRKDFISRIWLTYRKEFPQIESSSWTTDCGWGCTLRTGQMLLAQGLLVHFLGRDWTWTEALDIFCSESDFWTANTARKLDPSLEKSSPENEEYVSLGKQPLQNSEKKRYSEDLHRKIISWFADYPLAYFGLHQLVKLGKNSGKVAGDWYGPAVVSHLLRKAIEESSDPELQGITIYVAQDCTIYNADVYDLQCNKGNEKAVVILVPVRLGGERTNMEYFEYVKGILSLEFCIGIIGGKPKQSYYFVGFQDDSLIYMDPHYCQSFVDVSIKNFPLESFHCPSPKKMSFKKMDPSCTVGFYCRNAREFEKAAEELTKVLKSSTKQNYPLFTFVNGHAQDFDFVCTPVYDQNDLFTEDEKKRLKRFSTEEFVLL.

Cysteine 112 serves as the catalytic Nucleophile. Residues aspartate 336 and histidine 338 contribute to the active site.

It belongs to the peptidase C54 family.

The protein resides in the cytoplasm. The catalysed reaction is [protein]-C-terminal L-amino acid-glycyl-phosphatidylethanolamide + H2O = [protein]-C-terminal L-amino acid-glycine + a 1,2-diacyl-sn-glycero-3-phosphoethanolamine. In terms of biological role, cysteine protease that plays a key role in autophagy by mediating both proteolytic activation and delipidation of ATG8 family proteins. The protease activity is required for proteolytic activation of ATG8 family proteins: cleaves the C-terminal amino acid of ATG8 proteins to reveal a C-terminal glycine. Exposure of the glycine at the C-terminus is essential for ATG8 proteins conjugation to phosphatidylethanolamine (PE) and insertion to membranes, which is necessary for autophagy. In addition to the protease activity, also mediates delipidation of ATG8 family proteins. Catalyzes delipidation of PE-conjugated forms of ATG8 proteins during macroautophagy. This is Cysteine protease ATG4C from Xenopus laevis (African clawed frog).